We begin with the raw amino-acid sequence, 306 residues long: Large ribosomal subunit protein uL2m (306 aa).

A mitochondrion-targeting transit peptide spans Met-1–Ser-60.

Belongs to the universal ribosomal protein uL2 family. Component of the mitochondrial ribosome large subunit (39S) which comprises a 16S rRNA and about 50 distinct proteins.

It is found in the mitochondrion. This chain is Large ribosomal subunit protein uL2m (MRPL2), found in Bos taurus (Bovine).